A 470-amino-acid polypeptide reads, in one-letter code: Alpha-galactosidase (470 aa).

A signal peptide spans 1-18 (MFSLLLLTSTALVETALG). A disulfide bridge links C42 with C74. A glycan (N-linked (GlcNAc...) asparagine) is linked at N43. 2 residues coordinate substrate: D72 and D73. N82 is a glycosylation site (N-linked (GlcNAc...) asparagine). A disulfide bridge links C121 with C151. Position 147 (K147) interacts with substrate. The active-site Nucleophile is the D149. N175 is a glycosylation site (N-linked (GlcNAc...) asparagine). A substrate-binding site is contributed by R205. D209 serves as the catalytic Proton donor. Intrachain disulfides connect C221–C237 and C223–C230. A substrate-binding site is contributed by Q251. Residues N270, N388, N413, N422, N435, and N454 are each glycosylated (N-linked (GlcNAc...) asparagine).

This sequence belongs to the glycosyl hydrolase 27 family. In terms of assembly, homotetramer.

Its subcellular location is the secreted. The catalysed reaction is Hydrolysis of terminal, non-reducing alpha-D-galactose residues in alpha-D-galactosides, including galactose oligosaccharides, galactomannans and galactolipids.. This Zygotorulaspora mrakii (Zygosaccharomyces mrakii) protein is Alpha-galactosidase (MEL).